We begin with the raw amino-acid sequence, 303 residues long: N-acetyl-D-glucosamine kinase (303 aa).

ATP contacts are provided by residues 4–11 (GFDIGGTK) and 133–140 (GVGGGLIF). Residues His157, Cys177, Cys179, and Cys184 each contribute to the Zn(2+) site.

Belongs to the ROK (NagC/XylR) family. NagK subfamily.

The enzyme catalyses N-acetyl-D-glucosamine + ATP = N-acetyl-D-glucosamine 6-phosphate + ADP + H(+). Its pathway is cell wall biogenesis; peptidoglycan recycling. Its function is as follows. Catalyzes the phosphorylation of N-acetyl-D-glucosamine (GlcNAc) derived from cell-wall degradation, yielding GlcNAc-6-P. In Escherichia coli O9:H4 (strain HS), this protein is N-acetyl-D-glucosamine kinase.